A 301-amino-acid polypeptide reads, in one-letter code: GTPase Era (301 aa).

Residues 7 to 175 (YCGFIAIVGR…ASIVRKHLPE (169 aa)) enclose the Era-type G domain. Positions 15–22 (GRPNVGKS) are G1. Position 15-22 (15-22 (GRPNVGKS)) interacts with GTP. The segment at 41 to 45 (QTTRH) is G2. The segment at 62–65 (DTPG) is G3. GTP is bound by residues 62–66 (DTPGL) and 124–127 (NKVD). The interval 124–127 (NKVD) is G4. Residues 154–156 (ISA) are G5. The region spanning 206 to 283 (LGAELPYSVT…HLELWVKVKS (78 aa)) is the KH type-2 domain.

The protein belongs to the TRAFAC class TrmE-Era-EngA-EngB-Septin-like GTPase superfamily. Era GTPase family. As to quaternary structure, monomer.

It is found in the cytoplasm. The protein localises to the cell inner membrane. In terms of biological role, an essential GTPase that binds both GDP and GTP, with rapid nucleotide exchange. Plays a role in 16S rRNA processing and 30S ribosomal subunit biogenesis and possibly also in cell cycle regulation and energy metabolism. This is GTPase Era from Salmonella arizonae (strain ATCC BAA-731 / CDC346-86 / RSK2980).